The following is a 694-amino-acid chain: TBC1 domain family member 14 (694 aa).

A Phosphoserine modification is found at Ser92. Disordered regions lie at residues 108–130 (LPSC…KSST) and 272–305 (TAQK…RKNL). Residues 272-289 (TAQKDSKKTQKEYEDKAG) show a composition bias toward basic and acidic residues. Position 296 is a phosphoserine (Ser296). In terms of domain architecture, Rab-GAP TBC spans 402 to 612 (GIPPSVRGKV…RIWDVFCRDG (211 aa)).

As to quaternary structure, interacts with ULK1. May interact with RAB11A and RAB11B, but does not exhibit any GTPase-activating activity toward these proteins. Interacts with TRAPPC8. PubMed:15758561 detected expression at the stage of sexual maturation in testis, mainly in the spermatocytes. No expression detected in the ovary, brain, heart, lung, liver and kidney. PubMed:15200410 detected expression in brain, heart, lung, liver, spleen and kidney but not in small intestine.

It is found in the golgi apparatus. Its subcellular location is the cis-Golgi network. The protein resides in the trans-Golgi network. Plays a role in the regulation of starvation-induced autophagosome formation. Together with the TRAPPIII complex, regulates a constitutive trafficking step from peripheral recycling endosomes to the early Golgi, maintaining the cycling pool of ATG9 required for initiation of autophagy. The polypeptide is TBC1 domain family member 14 (Tbc1d14) (Rattus norvegicus (Rat)).